The following is a 198-amino-acid chain: Leucyl/phenylalanyl-tRNA--protein transferase (198 aa).

It belongs to the L/F-transferase family.

The protein resides in the cytoplasm. It carries out the reaction N-terminal L-lysyl-[protein] + L-leucyl-tRNA(Leu) = N-terminal L-leucyl-L-lysyl-[protein] + tRNA(Leu) + H(+). The enzyme catalyses N-terminal L-arginyl-[protein] + L-leucyl-tRNA(Leu) = N-terminal L-leucyl-L-arginyl-[protein] + tRNA(Leu) + H(+). It catalyses the reaction L-phenylalanyl-tRNA(Phe) + an N-terminal L-alpha-aminoacyl-[protein] = an N-terminal L-phenylalanyl-L-alpha-aminoacyl-[protein] + tRNA(Phe). Functionally, functions in the N-end rule pathway of protein degradation where it conjugates Leu, Phe and, less efficiently, Met from aminoacyl-tRNAs to the N-termini of proteins containing an N-terminal arginine or lysine. The polypeptide is Leucyl/phenylalanyl-tRNA--protein transferase (Synechocystis sp. (strain ATCC 27184 / PCC 6803 / Kazusa)).